Reading from the N-terminus, the 853-residue chain is Guanine nucleotide exchange protein smcr8a (853 aa).

In terms of domain architecture, uDENN FLCN/SMCR8-type spans 47–219 (TSYAKFSKDF…KETELQKMNN (173 aa)). Disordered regions lie at residues 272–298 (PVMD…SRKS) and 418–454 (LKPG…SFSS). Residues 280–298 (DTNPSDSAENTVETESRKS) show a composition bias toward polar residues. The region spanning 316-753 (RLKTLEELCD…LISHLADHRT (438 aa)) is the cDENN FLCN/SMCR8-type domain. Residues 421-432 (GVESGEGPPESS) show a composition bias toward low complexity. Residues 433-454 (TSDITQETSEAADTETKGSFSS) show a composition bias toward polar residues. One can recognise a dDENN FLCN/SMCR8-type domain in the interval 762–826 (FLHIQGMLTQ…IIQYLSELIK (65 aa)).

The protein belongs to the SMCR8 family. Component of the C9orf72-SMCR8 complex. The C9orf72-SMCR8 complex associates with the ATG1/ULK1 kinase complex.

The protein localises to the cytoplasm. The protein resides in the nucleus. Its function is as follows. Component of the C9orf72-SMCR8 complex, a complex that has guanine nucleotide exchange factor (GEF) activity and regulates autophagy. In the complex, C9orf72 and SMCR8 probably constitute the catalytic subunits that promote the exchange of GDP to GTP, converting inactive GDP-bound RAB8A and RAB39B into their active GTP-bound form, thereby promoting autophagosome maturation. The C9orf72-SMCR8 complex also acts as a negative regulator of autophagy initiation by interacting with the ATG1/ULK1 kinase complex and inhibiting its protein kinase activity. In Danio rerio (Zebrafish), this protein is Guanine nucleotide exchange protein smcr8a (smcr8a).